Here is a 208-residue protein sequence, read N- to C-terminus: MADRGLLIVFSGPSGVGKGTVRREIFESSENQFQYSVSMTTRAQRPGEVDGVDYFFRTREEFEELIRQGQMLEYAEYVGNYYGTPLTYVNETLDKGIDVFLEIEVQGALQVKKKVPDAVFIFLTPPDLDELQDRLVGRGTDSAEVIAQRIEKAKEEIALMREYDYAIVNDQVSLAAERVKCVIEAEHFCVDRVIGHYQEMLPKSPTTR.

A Guanylate kinase-like domain is found at 5–184; sequence GLLIVFSGPS…AAERVKCVIE (180 aa). ATP is bound at residue 12-19; that stretch reads GPSGVGKG.

It belongs to the guanylate kinase family.

The protein localises to the cytoplasm. It catalyses the reaction GMP + ATP = GDP + ADP. Its function is as follows. Essential for recycling GMP and indirectly, cGMP. The polypeptide is Guanylate kinase (Streptococcus pneumoniae (strain ATCC BAA-255 / R6)).